The sequence spans 292 residues: Acetylglutamate kinase (292 aa).

Substrate is bound by residues Gly-64–Gly-65, Arg-86, and Asn-190.

It belongs to the acetylglutamate kinase family. ArgB subfamily.

It is found in the cytoplasm. The enzyme catalyses N-acetyl-L-glutamate + ATP = N-acetyl-L-glutamyl 5-phosphate + ADP. The protein operates within amino-acid biosynthesis; L-arginine biosynthesis; N(2)-acetyl-L-ornithine from L-glutamate: step 2/4. Its function is as follows. Catalyzes the ATP-dependent phosphorylation of N-acetyl-L-glutamate. In Geobacter sulfurreducens (strain ATCC 51573 / DSM 12127 / PCA), this protein is Acetylglutamate kinase.